We begin with the raw amino-acid sequence, 488 residues long: GlcNAc-binding protein A (488 aa).

The N-terminal stretch at 1 to 24 is a signal peptide; that stretch reads MIMIITKKTLLPVTLALFSSGVMA. The Chitin-binding type-4 domain maps to 25–202; that stretch reads HGYVSSVEGG…SFYNVIDVMF (178 aa). In terms of domain architecture, Chitin-binding type-3 spans 439–480; it reads AGSKVLATDGRIYECKPFPYSGYCIQWSPSATQFEPGVGSDW.

Belongs to the GbpA family.

The protein localises to the secreted. Its function is as follows. Probably interacts with GlcNAc residues. May promote attachment to both epithelial cell surfaces and chitin. In Photobacterium profundum (strain SS9), this protein is GlcNAc-binding protein A.